The primary structure comprises 138 residues: Acidic phospholipase A2 Drk-a1 (138 aa).

The signal sequence occupies residues 1–16; that stretch reads MRTLWIVAVCLIGVEG. Intrachain disulfides connect Cys42–Cys131, Cys44–Cys60, Cys59–Cys111, Cys65–Cys138, Cys66–Cys104, Cys73–Cys97, and Cys91–Cys102. Ca(2+) contacts are provided by Tyr43, Gly45, and Gly47. His63 is a catalytic residue. A Ca(2+)-binding site is contributed by Asp64. Asp105 is a catalytic residue.

The protein belongs to the phospholipase A2 family. Group II subfamily. D49 sub-subfamily. Ca(2+) is required as a cofactor. Expressed by the venom gland.

The protein resides in the secreted. It catalyses the reaction a 1,2-diacyl-sn-glycero-3-phosphocholine + H2O = a 1-acyl-sn-glycero-3-phosphocholine + a fatty acid + H(+). Functionally, snake venom phospholipase A2 (PLA2) that exhibits high hydrolytic activities and shows strong preference for the anionic micelles (dPPC with deoxycholate) to the zwitterionic micelles (dPPC with Triton X-100). PLA2 catalyzes the calcium-dependent hydrolysis of the 2-acyl groups in 3-sn-phosphoglycerides. The protein is Acidic phospholipase A2 Drk-a1 of Daboia russelii (Russel's viper).